The following is a 1394-amino-acid chain: DNA-directed RNA polymerase subunit beta' (1394 aa).

Zn(2+) is bound by residues cysteine 70, cysteine 72, cysteine 85, and cysteine 88. Aspartate 470, aspartate 472, and aspartate 474 together coordinate Mg(2+). The Zn(2+) site is built by cysteine 815, cysteine 889, cysteine 896, and cysteine 899.

Belongs to the RNA polymerase beta' chain family. In terms of assembly, the RNAP catalytic core consists of 2 alpha, 1 beta, 1 beta' and 1 omega subunit. When a sigma factor is associated with the core the holoenzyme is formed, which can initiate transcription. Requires Mg(2+) as cofactor. It depends on Zn(2+) as a cofactor.

The catalysed reaction is RNA(n) + a ribonucleoside 5'-triphosphate = RNA(n+1) + diphosphate. DNA-dependent RNA polymerase catalyzes the transcription of DNA into RNA using the four ribonucleoside triphosphates as substrates. This Anaeromyxobacter sp. (strain K) protein is DNA-directed RNA polymerase subunit beta'.